Consider the following 288-residue polypeptide: ATP synthase gamma chain (288 aa).

This sequence belongs to the ATPase gamma chain family. In terms of assembly, F-type ATPases have 2 components, CF(1) - the catalytic core - and CF(0) - the membrane proton channel. CF(1) has five subunits: alpha(3), beta(3), gamma(1), delta(1), epsilon(1). CF(0) has three main subunits: a, b and c.

The protein resides in the cell inner membrane. Its function is as follows. Produces ATP from ADP in the presence of a proton gradient across the membrane. The gamma chain is believed to be important in regulating ATPase activity and the flow of protons through the CF(0) complex. In Rickettsia bellii (strain RML369-C), this protein is ATP synthase gamma chain.